The primary structure comprises 87 residues: Small ribosomal subunit protein bS20 (87 aa).

This sequence belongs to the bacterial ribosomal protein bS20 family.

Its function is as follows. Binds directly to 16S ribosomal RNA. The polypeptide is Small ribosomal subunit protein bS20 (Rickettsia bellii (strain OSU 85-389)).